Consider the following 1372-residue polypeptide: DNA-directed RNA polymerase subunit beta' (1372 aa).

The Zn(2+) site is built by Cys69, Cys71, Cys84, and Cys87. Residues Asp460, Asp462, and Asp464 each coordinate Mg(2+). Residues Cys808, Cys882, Cys889, and Cys892 each coordinate Zn(2+).

It belongs to the RNA polymerase beta' chain family. The RNAP catalytic core consists of 2 alpha, 1 beta, 1 beta' and 1 omega subunit. When a sigma factor is associated with the core the holoenzyme is formed, which can initiate transcription. It depends on Mg(2+) as a cofactor. The cofactor is Zn(2+).

The catalysed reaction is RNA(n) + a ribonucleoside 5'-triphosphate = RNA(n+1) + diphosphate. DNA-dependent RNA polymerase catalyzes the transcription of DNA into RNA using the four ribonucleoside triphosphates as substrates. This is DNA-directed RNA polymerase subunit beta' from Rickettsia felis (strain ATCC VR-1525 / URRWXCal2) (Rickettsia azadi).